A 261-amino-acid polypeptide reads, in one-letter code: 6-phosphogluconolactonase (261 aa).

Belongs to the glucosamine/galactosamine-6-phosphate isomerase family. 6-phosphogluconolactonase subfamily.

It catalyses the reaction 6-phospho-D-glucono-1,5-lactone + H2O = 6-phospho-D-gluconate + H(+). Its pathway is carbohydrate degradation; pentose phosphate pathway; D-ribulose 5-phosphate from D-glucose 6-phosphate (oxidative stage): step 2/3. Functionally, hydrolysis of 6-phosphogluconolactone to 6-phosphogluconate. This Streptomyces coelicolor (strain ATCC BAA-471 / A3(2) / M145) protein is 6-phosphogluconolactonase (pgl).